The primary structure comprises 339 residues: Ketol-acid reductoisomerase (NADP(+)) (339 aa).

Residues 1-182 (MRVYYDRDAD…GGGRAGVIET (182 aa)) form the KARI N-terminal Rossmann domain. NADP(+) is bound by residues 24–27 (YGSQ), arginine 48, serine 51, threonine 53, and 83–86 (DELQ). Histidine 108 is an active-site residue. Glycine 134 contacts NADP(+). Residues 183–328 (TFKEECETDL…EKLRAMMPWI (146 aa)) form the KARI C-terminal knotted domain. Residues aspartate 191, glutamate 195, glutamate 227, and glutamate 231 each coordinate Mg(2+). Serine 252 contributes to the substrate binding site.

The protein belongs to the ketol-acid reductoisomerase family. It depends on Mg(2+) as a cofactor.

The enzyme catalyses (2R)-2,3-dihydroxy-3-methylbutanoate + NADP(+) = (2S)-2-acetolactate + NADPH + H(+). It carries out the reaction (2R,3R)-2,3-dihydroxy-3-methylpentanoate + NADP(+) = (S)-2-ethyl-2-hydroxy-3-oxobutanoate + NADPH + H(+). Its pathway is amino-acid biosynthesis; L-isoleucine biosynthesis; L-isoleucine from 2-oxobutanoate: step 2/4. It functions in the pathway amino-acid biosynthesis; L-valine biosynthesis; L-valine from pyruvate: step 2/4. Functionally, involved in the biosynthesis of branched-chain amino acids (BCAA). Catalyzes an alkyl-migration followed by a ketol-acid reduction of (S)-2-acetolactate (S2AL) to yield (R)-2,3-dihydroxy-isovalerate. In the isomerase reaction, S2AL is rearranged via a Mg-dependent methyl migration to produce 3-hydroxy-3-methyl-2-ketobutyrate (HMKB). In the reductase reaction, this 2-ketoacid undergoes a metal-dependent reduction by NADPH to yield (R)-2,3-dihydroxy-isovalerate. This Xanthobacter autotrophicus (strain ATCC BAA-1158 / Py2) protein is Ketol-acid reductoisomerase (NADP(+)).